The sequence spans 152 residues: Large ribosomal subunit protein eL32 (152 aa).

This sequence belongs to the eukaryotic ribosomal protein eL32 family.

This is Large ribosomal subunit protein eL32 (rpl32e) from Pyrobaculum aerophilum (strain ATCC 51768 / DSM 7523 / JCM 9630 / CIP 104966 / NBRC 100827 / IM2).